A 201-amino-acid polypeptide reads, in one-letter code: Protein S40-5 (201 aa).

2 disordered regions span residues 1–39 (MARG…LTEE) and 134–178 (SIHE…EGVG). Over residues 17-29 (GSSYSYGDSNGNS) the composition is skewed to low complexity.

This sequence belongs to the senescence regulator S40 family.

It is found in the cytoplasm. The polypeptide is Protein S40-5 (Arabidopsis thaliana (Mouse-ear cress)).